The following is a 3433-amino-acid chain: Genome polyprotein (3433 aa).

The interaction with host EXOC1 stretch occupies residues 2–15 (SKKPGGPGKSRAVN). The Cytoplasmic portion of the chain corresponds to 2 to 108 (SKKPGGPGKS…SSKQKKRGGK (107 aa)). Positions 37–72 (LIDGKGPIRFVLALLAFFRFTAIAPTRAVLDRWRGV) are hydrophobic; homodimerization of capsid protein C. Positions 106–123 (GGKTGIAVMIGLIASVGA) are cleaved as a propeptide — ER anchor for the capsid protein C, removed in mature form by serine protease NS3. The chain crosses the membrane as a helical span at residues 109–129 (TGIAVMIGLIASVGAVTLSNF). Residues 130-248 (QGKVMMTVNA…KATRYLVKTE (119 aa)) lie on the Extracellular side of the membrane. Asparagine 138 carries N-linked (GlcNAc...) asparagine; by host glycosylation. Residues 249-269 (SWILRNPGYALVAAVIGWMLG) traverse the membrane as a helical segment. At 270-275 (SNTMQR) the chain is on the cytoplasmic side. The chain crosses the membrane as a helical span at residues 276–290 (VVFVVLLLLVAPAYS). The Extracellular segment spans residues 291–743 (FNCLGMSNRD…QVFGGAFRSL (453 aa)). Cystine bridges form between cysteine 293–cysteine 320, cysteine 350–cysteine 406, cysteine 350–cysteine 411, cysteine 364–cysteine 395, cysteine 382–cysteine 406, and cysteine 382–cysteine 411. Residues 388–401 (DRGWGNGCGLFGKG) are fusion peptide. Asparagine 444 is a glycosylation site (N-linked (GlcNAc...) asparagine; by host). Intrachain disulfides connect cysteine 480/cysteine 578 and cysteine 595/cysteine 626. Residues 744–764 (FGGMSWITQGLLGALLLWMGI) form a helical membrane-spanning segment. The Cytoplasmic segment spans residues 765 to 770 (NARDRS). A helical transmembrane segment spans residues 771 to 791 (IALTFLAVGGVLLFLSVNVHA). Topologically, residues 792–1216 (DTGCAIDISR…AFAESNSGGD (425 aa)) are extracellular. Disulfide bonds link cysteine 795/cysteine 806 and cysteine 846/cysteine 934. Asparagine 921, asparagine 966, and asparagine 998 each carry an N-linked (GlcNAc...) asparagine; by host glycan. Intrachain disulfides connect cysteine 970–cysteine 1014, cysteine 1071–cysteine 1120, cysteine 1082–cysteine 1103, and cysteine 1104–cysteine 1107. Residues 1217–1237 (VVHLALMATFKIQPVFMVASF) traverse the membrane as a helical segment. At 1238 to 1245 (LKARWTNQ) the chain is on the cytoplasmic side. A helical membrane pass occupies residues 1246-1268 (ENILLMLAAVFFQMAYHDARQIL). Residues 1269-1288 (LWEIPDVLNSLAVAWMILRA) lie on the Lumenal side of the membrane. A helical membrane pass occupies residues 1289–1309 (ITFTTTSNVVVPLLALLTPGL). Residues 1310 to 1313 (RCLN) are Cytoplasmic-facing. A helical membrane pass occupies residues 1314 to 1331 (LDVYRILLLMVGIGSLIR). Residues 1332–1345 (EKRSAAAKKKGASL) lie on the Lumenal side of the membrane. A helical transmembrane segment spans residues 1346 to 1366 (LCLALASTGLFNPMILAAGLI). The Cytoplasmic portion of the chain corresponds to 1367 to 1375 (ACDPNRKRG). Residues 1376-1396 (WPATEVMTAVGLMFAIVGGLA) traverse the membrane as a helical segment. Topologically, residues 1397–1399 (ELD) are lumenal. Residues 1400 to 1420 (IDSMAIPMTIAGLMFAAFVIS) traverse the membrane as a helical segment. The Cytoplasmic portion of the chain corresponds to 1421–1477 (GKSTDMWIERTADISWESDAEITGSSERVDVRLDDDGNFQLMNDPGAPWKIWMLRMV). Positions 1428–1467 (IERTADISWESDAEITGSSERVDVRLDDDGNFQLMNDPGA) are interacts with and activates NS3 protease. The segment at residues 1478–1498 (CLAISAYTPWAILPSVVGFWI) is an intramembrane region (helical). Residues 1499–2174 (TLQYTKRGGV…RMALEELPDA (676 aa)) lie on the Cytoplasmic side of the membrane. In terms of domain architecture, Peptidase S7 spans 1506-1683 (GGVLWDTPSP…ERMDEPIPAG (178 aa)). Residues histidine 1556, aspartate 1580, and serine 1640 each act as charge relay system; for serine protease NS3 activity in the active site. Positions 1686 to 1842 (PEMLRKKQIT…ESNSPISDLQ (157 aa)) constitute a Helicase ATP-binding domain. Positions 1690–1693 (RKKQ) are important for RNA-binding. 1699–1706 (LHPGAGKT) contacts ATP. The short motif at 1790 to 1793 (DEAH) is the DEAH box element. One can recognise a Helicase C-terminal domain in the interval 1853 to 2018 (GYEWITEYTG…GLIAQFYQPE (166 aa)). Residue lysine 1894 is modified to N6-acetyllysine; by host. A regulates the ATPase activity of NS3 helicase region spans residues 2169–2173 (EELPD). The helical transmembrane segment at 2175-2195 (LQTIALIALLSVMTMGVFFLL) threads the bilayer. Over 2196-2200 (MQRKG) the chain is Lumenal. Residues 2201–2221 (IGKIGLGGAVLGVATFFCWMA) constitute an intramembrane region (helical). Glutamate 2222 is a topological domain (lumenal). The chain crosses the membrane as a helical span at residues 2223–2243 (VPGTKIAGMLLLSLLLMIVLI). At 2244–2258 (PEPEKQRSQTDNQLA) the chain is on the cytoplasmic side. A helical membrane pass occupies residues 2259-2279 (VFLICVMTLVSAVAANEMGWL). At 2280-2312 (DKTKSDISSLFGQRIEVKENFSMGEFLLDLRPA) the chain is on the lumenal side. Positions 2313–2333 (TAWSLYAVTTAVLTPLLKHLI) form an intramembrane region, helical. The Lumenal segment spans residues 2334 to 2380 (TSDYINTSLTSINVQASALFTLARGFPFVDVGVSALLLAAGCWGQVT). Residues 2381 to 2401 (LTVTVTAATLLFCHYAYMVPG) form a helical membrane-spanning segment. The Cytoplasmic portion of the chain corresponds to 2402–2444 (WQAEAMRSAQRRTAAGIMKNAVVDGIVATDVPELERTTPIMQK). A helical membrane pass occupies residues 2445 to 2465 (KVGQIMLILVSLAAVVVNPSV). The Lumenal portion of the chain corresponds to 2466-2470 (KTVRE). Residues 2471-2491 (AGILITAAAVTLWENGASSVW) form a helical membrane-spanning segment. At 2492–3433 (NATTAIGLCH…DTTLVEDTVL (942 aa)) the chain is on the cytoplasmic side. Residues 2529 to 2794 (GGAKGRTLGE…DVNLGSGTRA (266 aa)) enclose the mRNA cap 0-1 NS5-type MT domain. Serine 2584 contacts S-adenosyl-L-methionine. Residue serine 2584 is modified to Phosphoserine. Lysine 2589 serves as the catalytic For 2'-O-MTase activity. S-adenosyl-L-methionine contacts are provided by glycine 2614, tryptophan 2615, threonine 2632, lysine 2633, glutamate 2639, aspartate 2659, valine 2660, aspartate 2674, and isoleucine 2675. The active-site For 2'-O-MTase activity is aspartate 2674. Residues lysine 2710 and glutamate 2746 each act as for 2'-O-MTase activity in the active site. Residue tyrosine 2748 coordinates S-adenosyl-L-methionine. The short motif at 2917–2919 (REK) is the Nuclear localization signal element. Residues glutamate 2968, histidine 2972, cysteine 2977, and cysteine 2980 each contribute to the Zn(2+) site. Residues 3058–3210 (GKIYADDTAG…KPLDDRFATS (153 aa)) form the RdRp catalytic domain. Zn(2+) is bound by residues histidine 3245, cysteine 3261, and cysteine 3380. The short motif at 3431–3433 (TVL) is the PDZ-binding element.

It in the N-terminal section; belongs to the class I-like SAM-binding methyltransferase superfamily. mRNA cap 0-1 NS5-type methyltransferase family. As to quaternary structure, homodimer. Interacts (via N-terminus) with host EXOC1 (via C-terminus); this interaction results in EXOC1 degradation through the proteasome degradation pathway. Interacts with host DDX56; this interaction plays an important role in genomic RNA encapsidation. In terms of assembly, forms heterodimers with envelope protein E in the endoplasmic reticulum and Golgi. Homodimer; in the endoplasmic reticulum and Golgi. As to quaternary structure, homodimer; Homohexamer when secreted. NS1 interacts with NS4B. Interacts with host complement protein CFH; this interaction leads to the degradation of C3. In terms of assembly, forms a heterodimer with serine protease NS3. May form homooligomers. Interacts with human SPCS1. Forms a heterodimer with NS2B. Interacts with NS4B. Interacts with unphosphorylated RNA-directed RNA polymerase NS5; this interaction stimulates RNA-directed RNA polymerase NS5 guanylyltransferase activity. As to quaternary structure, interacts with host RTN3; this interaction is important to remodel host cell membranes. In terms of assembly, interacts with Serine protease/Helicase NS3. Interacts with NS1. Homodimer. Interacts with host STAT2; this interaction inhibits the phosphorylation of the latter, and, when all viral proteins are present (polyprotein), targets STAT2 for degradation. In terms of processing, specific enzymatic cleavages in vivo yield mature proteins. Cleavages in the lumen of endoplasmic reticulum are performed by host signal peptidase, whereas cleavages in the cytoplasmic side are performed by serine protease NS3. Signal cleavage at the 2K-4B site requires a prior NS3 protease-mediated cleavage at the 4A-2K site. Post-translationally, cleaved in post-Golgi vesicles by a host furin, releasing the mature small envelope protein M, and peptide pr. This cleavage is incomplete as up to 30% of viral particles still carry uncleaved prM. N-glycosylated. In terms of processing, N-glycosylated. The excreted form is glycosylated and this is required for efficient secretion of the protein from infected cells. Post-translationally, acetylated by host KAT5. Acetylation modulates NS3 RNA-binding and unwinding activities and plays an important positive role for viral replication. Phosphorylated on serines residues. This phosphorylation may trigger NS5 nuclear localization.

It localises to the virion. The protein localises to the host nucleus. It is found in the host cytoplasm. Its subcellular location is the host perinuclear region. The protein resides in the secreted. It localises to the virion membrane. The protein localises to the host endoplasmic reticulum membrane. It catalyses the reaction Selective hydrolysis of -Xaa-Xaa-|-Yaa- bonds in which each of the Xaa can be either Arg or Lys and Yaa can be either Ser or Ala.. The enzyme catalyses RNA(n) + a ribonucleoside 5'-triphosphate = RNA(n+1) + diphosphate. The catalysed reaction is a ribonucleoside 5'-triphosphate + H2O = a ribonucleoside 5'-diphosphate + phosphate + H(+). It carries out the reaction ATP + H2O = ADP + phosphate + H(+). It catalyses the reaction a 5'-end (5'-triphosphoguanosine)-ribonucleoside in mRNA + S-adenosyl-L-methionine = a 5'-end (N(7)-methyl 5'-triphosphoguanosine)-ribonucleoside in mRNA + S-adenosyl-L-homocysteine. The enzyme catalyses a 5'-end (N(7)-methyl 5'-triphosphoguanosine)-ribonucleoside in mRNA + S-adenosyl-L-methionine = a 5'-end (N(7)-methyl 5'-triphosphoguanosine)-(2'-O-methyl-ribonucleoside) in mRNA + S-adenosyl-L-homocysteine + H(+). In terms of biological role, plays a role in virus budding by binding to the cell membrane and gathering the viral RNA into a nucleocapsid that forms the core of a mature virus particle. During virus entry, may induce genome penetration into the host cytoplasm after hemifusion induced by the surface proteins. Can migrate to the cell nucleus where it modulates host functions. Overcomes the anti-viral effects of host EXOC1 by sequestering and degrading the latter through the proteasome degradation pathway. Its function is as follows. Inhibits RNA silencing by interfering with host Dicer. Prevents premature fusion activity of envelope proteins in trans-Golgi by binding to envelope protein E at pH6.0. After virion release in extracellular space, gets dissociated from E dimers. Functionally, acts as a chaperone for envelope protein E during intracellular virion assembly by masking and inactivating envelope protein E fusion peptide. prM is the only viral peptide matured by host furin in the trans-Golgi network probably to avoid catastrophic activation of the viral fusion activity in acidic Golgi compartment prior to virion release. prM-E cleavage is inefficient, and many virions are only partially matured. These uncleaved prM would play a role in immune evasion. In terms of biological role, may play a role in virus budding. Exerts cytotoxic effects by activating a mitochondrial apoptotic pathway through M ectodomain. May display a viroporin activity. Its function is as follows. Binds to host cell surface receptor and mediates fusion between viral and cellular membranes. Envelope protein is synthesized in the endoplasmic reticulum in the form of heterodimer with protein prM. They play a role in virion budding in the ER, and the newly formed immature particle is covered with 60 spikes composed of heterodimer between precursor prM and envelope protein E. The virion is transported to the Golgi apparatus where the low pH causes dissociation of PrM-E heterodimers and formation of E homodimers. prM-E cleavage is inefficient, and many virions are only partially matured. These uncleaved prM would play a role in immune evasion. Involved in immune evasion, pathogenesis and viral replication. Once cleaved off the polyprotein, is targeted to three destinations: the viral replication cycle, the plasma membrane and the extracellular compartment. Essential for viral replication. Required for formation of the replication complex and recruitment of other non-structural proteins to the ER-derived membrane structures. Excreted as a hexameric lipoparticle that plays a role against host immune response. Antagonizing the complement function. Binds to the host macrophages and dendritic cells. Inhibits signal transduction originating from Toll-like receptor 3 (TLR3). Functionally, component of the viral RNA replication complex that functions in virion assembly and antagonizes the host alpha/beta interferon antiviral response. In terms of biological role, required cofactor for the serine protease function of NS3. May have membrane-destabilizing activity and form viroporins. Its function is as follows. Displays three enzymatic activities: serine protease, NTPase and RNA helicase. NS3 serine protease, in association with NS2B, performs its autocleavage and cleaves the polyprotein at dibasic sites in the cytoplasm: C-prM, NS2A-NS2B, NS2B-NS3, NS3-NS4A, NS4A-2K and NS4B-NS5. NS3 RNA helicase binds RNA and unwinds dsRNA in the 3' to 5' direction. NS3 supports the separation of RNA daughter and template strands during viral replication. The helicase part is involved in the inhibition of phosphorylation of host STAT1, and thereby inhibition of host type-I IFN signaling. In addition, NS3 assists the initiation of replication by unwinding the RNA secondary structure in the 3' non-translated region (NTR). Inhibits STAT2 translocation in the nucleus after IFN-alpha treatment. Facilitates host membrane remodelling necessary for viral replication by interacting with host RTN3. Regulates the ATPase activity of the NS3 helicase activity. NS4A allows NS3 helicase to conserve energy during unwinding. Functionally, functions as a signal peptide for NS4B and is required for the interferon antagonism activity of the latter. In terms of biological role, induces the formation of ER-derived membrane vesicles where the viral replication takes place. Inhibits interferon (IFN)-induced host STAT1 phosphorylation and nuclear translocation, thereby preventing the establishment of cellular antiviral state by blocking the IFN-alpha/beta pathway. Inhibits STAT2 translocation in the nucleus after IFN-alpha treatment. Its function is as follows. Replicates the viral (+) and (-) genome, and performs the capping of genomes in the cytoplasm. NS5 methylates viral RNA cap at guanine N-7 and ribose 2'-O positions. Besides its role in RNA genome replication, also prevents the establishment of cellular antiviral state by blocking the interferon-alpha/beta (IFN-alpha/beta) signaling pathway. Inhibits host JAK1 and TYK2 phosphorylation, thereby preventing activation of JAK-STAT signaling pathway. This Aedes (Tropical bont tick) protein is Genome polyprotein.